Reading from the N-terminus, the 299-residue chain is Serine/threonine-protein kinase 1 (299 aa).

The Protein kinase domain maps to 39–277 (IATKPMFEGG…FKGLVSHPWF (239 aa)). Residues 45-53 (FEGGRRNNV) and Lys-66 each bind ATP. Asp-153 serves as the catalytic Proton acceptor.

It belongs to the protein kinase superfamily. Ser/Thr protein kinase family.

Its subcellular location is the virion. The protein localises to the host cytoplasm. It catalyses the reaction L-seryl-[protein] + ATP = O-phospho-L-seryl-[protein] + ADP + H(+). It carries out the reaction L-threonyl-[protein] + ATP = O-phospho-L-threonyl-[protein] + ADP + H(+). Its function is as follows. Essential for viral replication. It may mediate the virus progression through DNA replication. In African swine fever virus (isolate Tick/Malawi/Lil 20-1/1983) (ASFV), this protein is Serine/threonine-protein kinase 1.